Consider the following 389-residue polypeptide: P2X purinoceptor 6 (389 aa).

At 1 to 45 (MQLQPAGTGNMASAAAAALVSWGFLDYKTEKYVLTRNCRVGVSQR) the chain is on the cytoplasmic side. The chain crosses the membrane as a helical span at residues 46-66 (LLQLAVVVYVIGWALLAKKGY). At 67–335 (QERDLAPQTS…LVTGQAGKFA (269 aa)) the chain is on the extracellular side. 3 disulfides stabilise this stretch: Cys-129/Cys-179, Cys-140/Cys-163, and Cys-146/Cys-173. 3 N-linked (GlcNAc...) asparagine glycosylation sites follow: Asn-167, Asn-197, and Asn-212. Intrachain disulfides connect Cys-230-Cys-240 and Cys-274-Cys-283. A helical transmembrane segment spans residues 336–356 (LIPTAITVGTGAAWLGMVTFL). At 357-389 (CDLLLLYVDREAGFYWRTKYEEARAPKTTTNSS) the chain is on the cytoplasmic side.

It belongs to the P2X receptor family. In terms of assembly, unlike most P2RXs, P2RX6 does not seem to form homotrimers. P2RX6 are likely to form as obligate heteromers with other P2RXs subunits. Forms heterotrimer with P2RX2 with a variable subunit stoichiometry determined by subunit expression levels. Forms heterotrimer with P2RX4; functional differences between homomeric P2RX4 and P2RX4/6 heterotrimer are minor. Forms a P2RX2/P2RX4/P2RX6 heterotrimer. Interacts with SF3A1; resulting in a reduction of the splicing activity. Post-translationally, N-glycosylated. N-linked glycosylation can affect trafficking to the membrane and function. Predominantly expressed in skeletal muscle. Also expressed in lung.

It localises to the cell membrane. The protein resides in the endoplasmic reticulum. The protein localises to the nucleus. It is found in the nucleus inner membrane. The catalysed reaction is Ca(2+)(in) = Ca(2+)(out). Functionally, acts as a modulatory subunit rather than a functional channel. Unlike other P2XRs members, P2RX6 does not seem to form functional homotrimers. P2RX6 requires the presence of P2RX4 or P2RX2 to form functional heterotrimeric receptors at the plasma membrane. P2RX6 can be translocated to the nucleus, where it interacts with the splicing factor (SF3A1), to reduce the incidence of mRNA splicing. May function as a nuclear regulator of post-transcriptional modifications in neurons. The polypeptide is P2X purinoceptor 6 (P2rx6) (Mus musculus (Mouse)).